Reading from the N-terminus, the 434-residue chain is L-2-hydroxyglutarate dehydrogenase, mitochondrial (434 aa).

It belongs to the L2HGDH family. FAD serves as cofactor.

It localises to the mitochondrion. It carries out the reaction (S)-2-hydroxyglutarate + A = 2-oxoglutarate + AH2. The protein is L-2-hydroxyglutarate dehydrogenase, mitochondrial of Caenorhabditis briggsae.